We begin with the raw amino-acid sequence, 393 residues long: Alpha-1,2 mannosyltransferase KTR1 (393 aa).

Over 1–16 the chain is Cytoplasmic; the sequence is MAKIMIPASKQPVYKK. A helical; Signal-anchor for type II membrane protein transmembrane segment spans residues 17–34; that stretch reads LGLLLVAVFTVYVFFHGA. The stem region stretch occupies residues 35–68; that stretch reads QYARGSAPSPKYSTVLSSGSGYKYSKVELPKYTG. Residues 35–393 are Lumenal-facing; that stretch reads QYARGSAPSP…KPAGWQNHIG (359 aa). Positions 69–393 are catalytic; sequence PREKATFVTL…KPAGWQNHIG (325 aa). The N-linked (GlcNAc...) asparagine glycan is linked to N120. The active-site Nucleophile is the E280.

It belongs to the glycosyltransferase 15 family. The cofactor is Mn(2+). N-glycosylated.

The protein resides in the golgi apparatus membrane. The protein operates within protein modification; protein glycosylation. Functionally, mannosyltransferase that transfers a mannose residue from GDP-mannose to a range of acceptors in vitro, forming an alpha-(1-&gt;2)-D-mannosyl-D-mannose linkage. The protein is Alpha-1,2 mannosyltransferase KTR1 (KTR1) of Saccharomyces cerevisiae (strain ATCC 204508 / S288c) (Baker's yeast).